The following is a 125-amino-acid chain: Large ribosomal subunit protein bL12 (125 aa).

Belongs to the bacterial ribosomal protein bL12 family. As to quaternary structure, homodimer. Part of the ribosomal stalk of the 50S ribosomal subunit. Forms a multimeric L10(L12)X complex, where L10 forms an elongated spine to which 2 to 4 L12 dimers bind in a sequential fashion. Binds GTP-bound translation factors.

In terms of biological role, forms part of the ribosomal stalk which helps the ribosome interact with GTP-bound translation factors. Is thus essential for accurate translation. In Thermoanaerobacter pseudethanolicus (strain ATCC 33223 / 39E) (Clostridium thermohydrosulfuricum), this protein is Large ribosomal subunit protein bL12.